A 913-amino-acid polypeptide reads, in one-letter code: Rab GTPase-activating protein tbc-8 (913 aa).

Residues Met-1 to Thr-24 form a disordered region. The RUN domain occupies Asn-106–Glu-240. Positions Ile-597–Gln-844 constitute a Rab-GAP TBC domain.

It belongs to the RUTBC family. Interacts with rab-19. Interacts with ric-19; the interaction is direct and may be required for the activation of rab-2 and dense vesicle maturation in cholinergic motoneurons. Interacts (via RUN domain) with rund-1. Does not interact with unc-108 (GTP-bound form). In terms of tissue distribution, expressed in neurons in the head, tail and ventral nerve cord (at protein level).

The protein resides in the golgi apparatus. It is found in the trans-Golgi network. It localises to the early endosome. Its subcellular location is the cytoplasmic vesicle membrane. Its function is as follows. Interacts with numerous Rab family members, functioning as Rab effector for some, and as GTPase activator for others. GTPase activator for rab-2. In association with ric-19 activates rab-2 during dense core vesicle maturation in cholinergic motoneurons. In Caenorhabditis elegans, this protein is Rab GTPase-activating protein tbc-8.